The primary structure comprises 91 residues: Large ribosomal subunit protein bL27 (91 aa).

The disordered stretch occupies residues Met-1 to Leu-21.

Belongs to the bacterial ribosomal protein bL27 family.

In Azoarcus sp. (strain BH72), this protein is Large ribosomal subunit protein bL27.